Reading from the N-terminus, the 337-residue chain is GTPase Obg (337 aa).

An Obg domain is found at 1–159 (MKFVDSASIF…LMLNMELKLM (159 aa)). The OBG-type G domain occupies 160 to 323 (ADVGLVGFPN…LKDELWREVS (164 aa)). Residues 166-173 (GFPNAGKS), 191-195 (FTTLV), 213-216 (DIPG), 280-283 (TKMD), and 304-306 (SAV) each bind GTP. Mg(2+) contacts are provided by serine 173 and threonine 193.

This sequence belongs to the TRAFAC class OBG-HflX-like GTPase superfamily. OBG GTPase family. Monomer. The cofactor is Mg(2+).

The protein resides in the cytoplasm. Its function is as follows. An essential GTPase which binds GTP, GDP and possibly (p)ppGpp with moderate affinity, with high nucleotide exchange rates and a fairly low GTP hydrolysis rate. Plays a role in control of the cell cycle, stress response, ribosome biogenesis and in those bacteria that undergo differentiation, in morphogenesis control. The protein is GTPase Obg of Pelodictyon phaeoclathratiforme (strain DSM 5477 / BU-1).